A 160-amino-acid chain; its full sequence is Protein-export protein SecB (160 aa).

Belongs to the SecB family. In terms of assembly, homotetramer, a dimer of dimers. One homotetramer interacts with 1 SecA dimer.

The protein resides in the cytoplasm. Its function is as follows. One of the proteins required for the normal export of preproteins out of the cell cytoplasm. It is a molecular chaperone that binds to a subset of precursor proteins, maintaining them in a translocation-competent state. It also specifically binds to its receptor SecA. The chain is Protein-export protein SecB from Rhodospirillum rubrum (strain ATCC 11170 / ATH 1.1.1 / DSM 467 / LMG 4362 / NCIMB 8255 / S1).